A 583-amino-acid polypeptide reads, in one-letter code: MERSMYAGRVRSEHIGTTITLKGWVSRRRNLGGLIFIDLRDREGLMQLVVNPENADAAVVETAESLRSEFVIEVTGTVEAREQANDNLPTGAVELKVKDLKVLNTAKTTPFEIKDGVEASDDTRMRYRYLDLRRPEMLENFKLRAKVTHTIRNYLDDLEFIDVETPMLTKSTPEGARDYLVPSRVSQGHFYALPQSPQITKQLLMNAGFDRYYQIVKCFRDEDLRGDRQPEFTQVDLETSFLNEQEIQDITEGLIAKVMKETKGVEVTLPFPRMSYDDAMNNYGSDKPDTRFDMLLQDLTELVKDVDFKVFAEAPAVKAIVVKGNADKYSRKSIDKLTDFAKQFGAKGLAWVKMTDGVLAGPVAKFLTSIEEKLTDTLQIEENDLVLFVADTLEIANNTLGALRNQIAKELDMIDNTKFNFLWVVDWPMFEWSEEEGRYMSAHHPFTLPTEDSAAELEGDLSKVRAVAYDIVLNGYELGGGSLRINQKDLQERMLKALGFSEESAYEQFGFLLEAMDYGFPPHGGLALGLDRFVMLLAGKDNIREVIAFPKNNKASDPMTQAPSLVADKQLEELALHVELENE.

Residue E174 coordinates L-aspartate. The aspartate stretch occupies residues Q198–K201. Residue R220 coordinates L-aspartate. ATP is bound by residues R220–E222 and Q229. H443 contacts L-aspartate. Position 477 (E477) interacts with ATP. L-aspartate is bound at residue R484. G529–R532 provides a ligand contact to ATP.

Belongs to the class-II aminoacyl-tRNA synthetase family. Type 1 subfamily. In terms of assembly, homodimer.

The protein resides in the cytoplasm. The enzyme catalyses tRNA(Asp) + L-aspartate + ATP = L-aspartyl-tRNA(Asp) + AMP + diphosphate. In terms of biological role, catalyzes the attachment of L-aspartate to tRNA(Asp) in a two-step reaction: L-aspartate is first activated by ATP to form Asp-AMP and then transferred to the acceptor end of tRNA(Asp). In Streptococcus thermophilus (strain ATCC BAA-250 / LMG 18311), this protein is Aspartate--tRNA ligase.